Here is an 860-residue protein sequence, read N- to C-terminus: LPS-assembly protein LptD (860 aa).

The first 21 residues, 1-21, serve as a signal peptide directing secretion; it reads MTKRYFSLLAVCSAIATSTFA.

The protein belongs to the LptD family. In terms of assembly, component of the lipopolysaccharide transport and assembly complex. Interacts with LptE and LptA.

Its subcellular location is the cell outer membrane. Functionally, together with LptE, is involved in the assembly of lipopolysaccharide (LPS) at the surface of the outer membrane. This is LPS-assembly protein LptD from Saccharophagus degradans (strain 2-40 / ATCC 43961 / DSM 17024).